We begin with the raw amino-acid sequence, 74 residues long: DNA gyrase inhibitor YacG (74 aa).

Zn(2+) is bound by residues Cys7, Cys10, Cys26, and Cys30.

Belongs to the DNA gyrase inhibitor YacG family. As to quaternary structure, interacts with GyrB. Zn(2+) is required as a cofactor.

In terms of biological role, inhibits all the catalytic activities of DNA gyrase by preventing its interaction with DNA. Acts by binding directly to the C-terminal domain of GyrB, which probably disrupts DNA binding by the gyrase. In Shewanella denitrificans (strain OS217 / ATCC BAA-1090 / DSM 15013), this protein is DNA gyrase inhibitor YacG.